The sequence spans 271 residues: Beta-lactamase (271 aa).

Ser46 functions as the Acyl-ester intermediate in the catalytic mechanism. Residue 210–212 (KTG) coordinates substrate.

It belongs to the class-A beta-lactamase family. As to quaternary structure, monomer.

It catalyses the reaction a beta-lactam + H2O = a substituted beta-amino acid. Functionally, hydrolyzes broad-spectrum beta-lactam antibiotics. Active against cephalosporins. This is Beta-lactamase from Proteus vulgaris.